Here is a 58-residue protein sequence, read N- to C-terminus: Small ribosomal subunit protein uS14 (58 aa).

The interval 1-21 (MSESETEQTGEHASHRTGQTH) is disordered. Basic and acidic residues predominate over residues 9-21 (TGEHASHRTGQTH). The Zn(2+) site is built by C23, C26, C41, and C44.

Belongs to the universal ribosomal protein uS14 family. Zinc-binding uS14 subfamily. Part of the 30S ribosomal subunit. Zn(2+) is required as a cofactor.

Its function is as follows. Binds 16S rRNA, required for the assembly of 30S particles. In Haloquadratum walsbyi (strain DSM 16790 / HBSQ001), this protein is Small ribosomal subunit protein uS14.